We begin with the raw amino-acid sequence, 254 residues long: Sensory rhodopsin (254 aa).

The Extracellular portion of the chain corresponds to 1 to 4 (MTGA). A helical membrane pass occupies residues 5 to 26 (VTSAYWLAAVAFLIGVGITAAL). Topologically, residues 27 to 35 (YAKLEGSRA) are cytoplasmic. Residues 36–57 (RTRLAALAVIPGFAGLSYVGMA) traverse the membrane as a helical segment. Residues 58–71 (LGIGTVTVNGAELV) are Extracellular-facing. The helical transmembrane segment at 72-93 (GLRYVDWVVTTPLLVGFIGYNA) threads the bilayer. The Cytoplasmic portion of the chain corresponds to 94–96 (GAS). The chain crosses the membrane as a helical span at residues 97-119 (RRAIAGVMIADALMIVFGAAAVV). Residues 120 to 123 (SGGT) are Extracellular-facing. Residues 124–151 (LKWALFGVSALFHVSLFAYLYVIFPGGI) form a helical membrane-spanning segment. At 152-154 (PDD) the chain is on the cytoplasmic side. Residues 155–182 (PMQRGLFSLLKNHVGLLWLAYPFVWLMG) traverse the membrane as a helical segment. The Extracellular portion of the chain corresponds to 183–190 (PAGIGFTG). A helical transmembrane segment spans residues 191-223 (AVGAALTYAFLDVLAKVPYVYFFYARRQAFIDV). Residue K206 is modified to N6-(retinylidene)lysine. Residues 224–254 (TDSRAAAKGDGPAVGGEAPVATGDDAPTAAD) lie on the Cytoplasmic side of the membrane. Residues 231–254 (KGDGPAVGGEAPVATGDDAPTAAD) form a disordered region.

The protein belongs to the archaeal/bacterial/fungal opsin family.

It is found in the cell membrane. Involved in the control of phototaxis. The chain is Sensory rhodopsin (sop) from Halorubrum sodomense.